The primary structure comprises 230 residues: Intracellular hyphae protein 1 (230 aa).

A signal peptide spans 1–18 (MQTSFVALLAVAASLASA). A disordered region spans residues 20–102 (PHGGNSYEAS…KNNTLPVPTC (83 aa)). A run of 10 repeats spans residues 30 to 33 (LPEP), 36 to 39 (LPEP), 42 to 45 (LPEP), 46 to 49 (VEGP), 50 to 53 (YKPK), 57 to 60 (LPEP), 65 to 68 (YKPK), 76 to 79 (VEGP), 80 to 83 (YKPK), and 84 to 87 (LPEP). A 5 X 4 AA repeats of L-P-E-P region spans residues 30-87 (LPEPTNLPEPTKLPEPVEGPYKPKPPILPEPIKDNYKPKTPILPEHVEGPYKPKLPEP). The segment at 46–87 (VEGPYKPKPPILPEPIKDNYKPKTPILPEHVEGPYKPKLPEP) is 2 X 4 AA repeats of V-E-G-P. A 3 X 4 AA repeats of Y-K-P-K region spans residues 50-83 (YKPKPPILPEPIKDNYKPKTPILPEHVEGPYKPK). The span at 74–84 (EHVEGPYKPKL) shows a compositional bias: basic and acidic residues. Residue N94 is glycosylated (N-linked (GlcNAc...) asparagine). The 45-residue stretch at 108-152 (KTHKVKSGESLTTIAEKYDTGICNIAKLNNLADPNFVDLNQDLQI) folds into the LysM 1 domain. N-linked (GlcNAc...) asparagine glycosylation is present at N161. Positions 183–227 (DIYSVVSGDTLTSIAQALQITLQSLKDANPGVVPEHLNVGQKLNV) constitute a LysM 2 domain.

As to quaternary structure, forms a multimeric structure. N-glycosylated and may be O-glycosylated. In terms of tissue distribution, expressed in penetration hyphae, infection vesicles and primary hyphae (intracellular hyphae).

It is found in the secreted. The protein localises to the cell wall. Functionally, may have roles in host-pathogen interaction, including establishment and maintenance of biotrophy, prevention of host recognition of the fungus and a barrier to host defense molecules. The polypeptide is Intracellular hyphae protein 1 (CIH1) (Colletotrichum lindemuthianum (Bean anthracnose fungus)).